The sequence spans 190 residues: MTVGVLALQGDFREHCAVLRRIGVEPIEVRLPRQLEQVERLIIPGGESTTIGRLLTIYQMLEPIRARAGRDLAIWGTCAGAILLASVVTDQKQGGQPTLSLMNLTIQRNAYGSQLDSFEAPITMPIIGEKPLQGVFIRAPRIISVGSGCEAVGWLEDGSVVAARQGRLLATTFHPELTDDDRVHRLFLEL.

46–48 lines the L-glutamine pocket; sequence GES. The Nucleophile role is filled by Cys-78. Residues Arg-108 and 137–138 each bind L-glutamine; that span reads IR. Residues His-174 and Glu-176 each act as charge relay system in the active site.

The protein belongs to the glutaminase PdxT/SNO family. In the presence of PdxS, forms a dodecamer of heterodimers. Only shows activity in the heterodimer.

The enzyme catalyses aldehydo-D-ribose 5-phosphate + D-glyceraldehyde 3-phosphate + L-glutamine = pyridoxal 5'-phosphate + L-glutamate + phosphate + 3 H2O + H(+). It carries out the reaction L-glutamine + H2O = L-glutamate + NH4(+). The protein operates within cofactor biosynthesis; pyridoxal 5'-phosphate biosynthesis. Catalyzes the hydrolysis of glutamine to glutamate and ammonia as part of the biosynthesis of pyridoxal 5'-phosphate. The resulting ammonia molecule is channeled to the active site of PdxS. This Chloroflexus aurantiacus (strain ATCC 29366 / DSM 635 / J-10-fl) protein is Pyridoxal 5'-phosphate synthase subunit PdxT.